The primary structure comprises 258 residues: HLA class II histocompatibility antigen, DP beta 1 chain (258 aa).

A signal peptide spans 1-29; sequence MMVLQVSAAPRTVALTALLMVLLTSVVQG. Residues 30–121 form a beta-1 region; sequence RATPENYLFQ…LGGPMTLQRR (92 aa). The Extracellular portion of the chain corresponds to 30-225; sequence RATPENYLFQ…KAQSDSARSK (196 aa). Cystine bridges form between Cys44–Cys106 and Cys144–Cys200. Asn48 carries an N-linked (GlcNAc...) asparagine glycan. Residues 122-215 form a beta-2 region; sequence VQPRVNVSPS…SLDSPVTVEW (94 aa). In terms of domain architecture, Ig-like C1-type spans 124 to 212; the sequence is PRVNVSPSKK…EHTSLDSPVT (89 aa). The interval 216–225 is connecting peptide; sequence KAQSDSARSK. A helical transmembrane segment spans residues 226 to 246; the sequence is TLTGAGGFVLGLIICGVGIFM. Topologically, residues 247-258 are cytoplasmic; that stretch reads HRRSKKVQRGSA.

Belongs to the MHC class II family. Heterodimer of an alpha and a beta subunit; also referred as MHC class II molecule. In the endoplasmic reticulum (ER) it forms a heterononamer; 3 MHC class II molecules bind to a CD74 homotrimer (also known as invariant chain or HLA class II histocompatibility antigen gamma chain). In the endosomal/lysosomal system; CD74 undergoes sequential degradation by various proteases; leaving a small fragment termed CLIP on each MHC class II molecule. MHC class II molecule interacts with HLA_DM, and HLA_DO in B-cells, in order to release CLIP and facilitate the binding of antigenic peptides.

It is found in the cell membrane. The protein localises to the endoplasmic reticulum membrane. The protein resides in the golgi apparatus. It localises to the trans-Golgi network membrane. Its subcellular location is the endosome membrane. It is found in the lysosome membrane. Functionally, binds peptides derived from antigens that access the endocytic route of antigen presenting cells (APC) and presents them on the cell surface for recognition by the CD4 T-cells. The peptide binding cleft accommodates peptides of 10-30 residues. The peptides presented by MHC class II molecules are generated mostly by degradation of proteins that access the endocytic route, where they are processed by lysosomal proteases and other hydrolases. Exogenous antigens that have been endocytosed by the APC are thus readily available for presentation via MHC II molecules, and for this reason this antigen presentation pathway is usually referred to as exogenous. As membrane proteins on their way to degradation in lysosomes as part of their normal turn-over are also contained in the endosomal/lysosomal compartments, exogenous antigens must compete with those derived from endogenous components. Autophagy is also a source of endogenous peptides, autophagosomes constitutively fuse with MHC class II loading compartments. In addition to APCs, other cells of the gastrointestinal tract, such as epithelial cells, express MHC class II molecules and CD74 and act as APCs, which is an unusual trait of the GI tract. To produce a MHC class II molecule that presents an antigen, three MHC class II molecules (heterodimers of an alpha and a beta chain) associate with a CD74 trimer in the ER to form a heterononamer. Soon after the entry of this complex into the endosomal/lysosomal system where antigen processing occurs, CD74 undergoes a sequential degradation by various proteases, including CTSS and CTSL, leaving a small fragment termed CLIP (class-II-associated invariant chain peptide). The removal of CLIP is facilitated by HLA-DM via direct binding to the alpha-beta-CLIP complex so that CLIP is released. HLA-DM stabilizes MHC class II molecules until primary high affinity antigenic peptides are bound. The MHC II molecule bound to a peptide is then transported to the cell membrane surface. In B-cells, the interaction between HLA-DM and MHC class II molecules is regulated by HLA-DO. Primary dendritic cells (DCs) also to express HLA-DO. Lysosomal microenvironment has been implicated in the regulation of antigen loading into MHC II molecules, increased acidification produces increased proteolysis and efficient peptide loading. This Homo sapiens (Human) protein is HLA class II histocompatibility antigen, DP beta 1 chain (HLA-DPB1).